A 515-amino-acid polypeptide reads, in one-letter code: Maturase K (515 aa).

The protein belongs to the intron maturase 2 family. MatK subfamily.

The protein resides in the plastid. Its subcellular location is the chloroplast. In terms of biological role, usually encoded in the trnK tRNA gene intron. Probably assists in splicing its own and other chloroplast group II introns. This chain is Maturase K, found in Pinus attenuata (Knobcone pine).